Here is a 349-residue protein sequence, read N- to C-terminus: Cyclic AMP-dependent transcription factor ATF-4 (349 aa).

Disordered stretches follow at residues 49–75 (FSSDKAGSSEWPAMDDGLASASDTGKE), 204–271 (PPCV…TAKV), and 279–298 (KLKKMEQNKTAATRYRQKKR). 4-hydroxyproline is present on P60. T212 carries the phosphothreonine modification. 5 positions are modified to phosphoserine: S214, S218, S223, S230, and S234. Positions 214-223 (SDNDSGICMS) match the BetaTrCP degron motif motif. The span at 229-239 (GSPQHSPSTSR) shows a compositional bias: polar residues. P235 carries the 4-hydroxyproline modification. Residue S247 is modified to Phosphoserine. S251 is modified (phosphoserine; by RPS6KA3). Glycyl lysine isopeptide (Lys-Gly) (interchain with G-Cter in SUMO2) cross-links involve residues K258 and K270. The 64-residue stretch at 276–339 (LDKKLKKMEQ…QYLKDLIEEV (64 aa)) folds into the bZIP domain. Residues 278–298 (KKLKKMEQNKTAATRYRQKKR) form a basic motif region. The interaction with GABBR1 stretch occupies residues 303–339 (ALTGECKELEKKNEALKEKADSLAKEIQYLKDLIEEV). The leucine-zipper stretch occupies residues 304–332 (LTGECKELEKKNEALKEKADSLAKEIQYL). The residue at position 309 (K309) is an N6-acetyllysine.

Belongs to the bZIP family. In terms of assembly, binds DNA as a homodimer and as a heterodimer. Heterodimer; heterodimerizes with CEBPB. Heterodimer; heterodimerizes with DDIT3/CHOP. Interacts with CEP290 (via an N-terminal region). Interacts with NEK6, DAPK2 (isoform 2) and ZIPK/DAPK3. Interacts (via its leucine zipper domain) with GABBR1 and GABBR2 (via their C-termini). Forms a heterodimer with TXLNG in osteoblasts. Interacts (via its DNA binding domain) with FOXO1 (C-terminal half); the interaction occurs in osteoblasts and regulates glucose homeostasis through suppression of beta-cell proliferation and a decrease in insulin production. Interacts with SATB2; the interaction results in enhanced DNA binding and transactivation by these transcription factors. Interacts with ABRAXAS2. Interacts with TRIB3, inhibiting the transactivation activity of ATF4. Interacts with DISC1; which inhibits ATF4 transcription factor activity by disrupting ATF4 dimerization and DNA-binding. Interacts with EP300/p300; EP300/p300 stabilizes ATF4 and increases its transcriptional activity independently of its catalytic activity by preventing its ubiquitination. Ubiquitinated by SCF(BTRC) in response to mTORC1 signal, followed by proteasomal degradation and leading to down-regulate expression of SIRT4. Interaction with EP300/p300 inhibits ubiquitination by SCF(BTRC). Post-translationally, phosphorylation at Ser-251 by RPS6KA3/RSK2 in osteoblasts enhances transactivation activity and promotes osteoblast differentiation. Phosphorylated on the betaTrCP degron motif at Ser-218, followed by phosphorylation at Thr-212, Ser-223, Ser-230, Ser-234 and Ser-247, promoting interaction with BTRC and ubiquitination. Phosphorylation is promoted by mTORC1. Phosphorylation at Ser-214 by CK2 decreases its stability. Phosphorylated by NEK6. In terms of processing, hydroxylated by PHD3, leading to decreased protein stability. As to expression, ubiquitously expressed in adults.

It is found in the nucleus. The protein localises to the nucleus speckle. Its subcellular location is the cytoplasm. The protein resides in the cell membrane. It localises to the cytoskeleton. It is found in the microtubule organizing center. The protein localises to the centrosome. Functionally, transcription factor that binds the cAMP response element (CRE) (consensus: 5'-GTGACGT[AC][AG]-3') and displays two biological functions, as regulator of metabolic and redox processes under normal cellular conditions, and as master transcription factor during integrated stress response (ISR). Binds to asymmetric CRE's as a heterodimer and to palindromic CRE's as a homodimer. Core effector of the ISR, which is required for adaptation to various stress such as endoplasmic reticulum (ER) stress, amino acid starvation, mitochondrial stress or oxidative stress. During ISR, ATF4 translation is induced via an alternative ribosome translation re-initiation mechanism in response to EIF2S1/eIF-2-alpha phosphorylation, and stress-induced ATF4 acts as a master transcription factor of stress-responsive genes in order to promote cell recovery. Promotes the transcription of genes linked to amino acid sufficiency and resistance to oxidative stress to protect cells against metabolic consequences of ER oxidation. Activates the transcription of NLRP1, possibly in concert with other factors in response to ER stress. Activates the transcription of asparagine synthetase (ASNS) in response to amino acid deprivation or ER stress. However, when associated with DDIT3/CHOP, the transcriptional activation of the ASNS gene is inhibited in response to amino acid deprivation. Together with DDIT3/CHOP, mediates programmed cell death by promoting the expression of genes involved in cellular amino acid metabolic processes, mRNA translation and the terminal unfolded protein response (terminal UPR), a cellular response that elicits programmed cell death when ER stress is prolonged and unresolved. Activates the expression of COX7A2L/SCAF1 downstream of the EIF2AK3/PERK-mediated unfolded protein response, thereby promoting formation of respiratory chain supercomplexes and increasing mitochondrial oxidative phosphorylation. Together with DDIT3/CHOP, activates the transcription of the IRS-regulator TRIB3 and promotes ER stress-induced neuronal cell death by regulating the expression of BBC3/PUMA in response to ER stress. May cooperate with the UPR transcriptional regulator QRICH1 to regulate ER protein homeostasis which is critical for cell viability in response to ER stress. In the absence of stress, ATF4 translation is at low levels and it is required for normal metabolic processes such as embryonic lens formation, fetal liver hematopoiesis, bone development and synaptic plasticity. Acts as a regulator of osteoblast differentiation in response to phosphorylation by RPS6KA3/RSK2: phosphorylation in osteoblasts enhances transactivation activity and promotes expression of osteoblast-specific genes and post-transcriptionally regulates the synthesis of Type I collagen, the main constituent of the bone matrix. Cooperates with FOXO1 in osteoblasts to regulate glucose homeostasis through suppression of beta-cell production and decrease in insulin production. Activates transcription of SIRT4. Regulates the circadian expression of the core clock component PER2 and the serotonin transporter SLC6A4. Binds in a circadian time-dependent manner to the cAMP response elements (CRE) in the SLC6A4 and PER2 promoters and periodically activates the transcription of these genes. Mainly acts as a transcriptional activator in cellular stress adaptation, but it can also act as a transcriptional repressor: acts as a regulator of synaptic plasticity by repressing transcription, thereby inhibiting induction and maintenance of long-term memory. Regulates synaptic functions via interaction with DISC1 in neurons, which inhibits ATF4 transcription factor activity by disrupting ATF4 dimerization and DNA-binding. The chain is Cyclic AMP-dependent transcription factor ATF-4 from Mus musculus (Mouse).